The chain runs to 1469 residues: ATP-binding cassette transporter abc4 (1469 aa).

The next 8 helical transmembrane spans lie at 21 to 40 (SLYY…FPTH), 55 to 74 (YSLE…RWIT), 94 to 114 (HGIL…FMFV), 121 to 141 (AFSD…LFLL), 160 to 180 (VLLN…PFFF), 189 to 209 (YSPF…IPLF), 296 to 316 (ILGM…SPIA), and 337 to 357 (WIVL…FYLF). In terms of domain architecture, ABC transmembrane type-1 1 spans 296-580 (ILGMGVSSFM…IAYLMRQIVQ (285 aa)). An N-linked (GlcNAc...) asparagine glycan is attached at Asn386. 2 consecutive transmembrane segments (helical) span residues 412-432 (EFIH…YLLQ) and 441-461 (VGLA…PLVA). Asn510 is a glycosylation site (N-linked (GlcNAc...) asparagine). 2 consecutive transmembrane segments (helical) span residues 524 to 544 (VLVE…FTTI) and 553 to 573 (IAFT…WIAY). Residues 611–840 (IGFFNASLTW…LAEQAASASE (230 aa)) enclose the ABC transporter 1 domain. Residue Asn615 is glycosylated (N-linked (GlcNAc...) asparagine). 648 to 655 (GPTGSGKS) is a binding site for ATP. 3 N-linked (GlcNAc...) asparagine glycosylation sites follow: Asn691, Asn790, and Asn815. A helical transmembrane segment spans residues 894–914 (GFYVAAVLLFFVTTQATSILI). The ABC transmembrane type-1 2 domain maps to 897-1176 (VAAVLLFFVT…FVRSCNSLQA (280 aa)). N-linked (GlcNAc...) asparagine glycosylation is present at Asn923. A helical membrane pass occupies residues 936–956 (FLFVYGTMLLAYSLLDFLRTV). N-linked (GlcNAc...) asparagine glycosylation is present at Asn1007. 5 helical membrane-spanning segments follow: residues 1009 to 1029 (SGWL…ILSV), 1033 to 1053 (MPIF…FGLL), 1065 to 1085 (ISIY…GVSV), 1120 to 1140 (VAVR…LIAL), and 1148 to 1168 (GVVG…LLFV). One can recognise an ABC transporter 2 domain in the interval 1214-1453 (FNHVSVSYSA…NGHFRRMCDG (240 aa)). 1246–1253 (GRTGSGKS) provides a ligand contact to ATP. N-linked (GlcNAc...) asparagine glycosylation is present at Asn1355.

The protein belongs to the ABC transporter superfamily. ABCC family. Conjugate transporter (TC 3.A.1.208) subfamily.

Its subcellular location is the vacuole membrane. The catalysed reaction is ATP + H2O + xenobioticSide 1 = ADP + phosphate + xenobioticSide 2.. Its function is as follows. Involved in detoxification of xenobiotics, and vacuolar sequestration of glutathione S-conjugates. Together with abc2, required for accumulation of a red pigment (ade pigment) in the vacuole of a mutant affected in the adenine biosynthetic pathway. The chain is ATP-binding cassette transporter abc4 from Schizosaccharomyces pombe (strain 972 / ATCC 24843) (Fission yeast).